Reading from the N-terminus, the 258-residue chain is MGGKMLRSVSELIYKVYARYLLGQINLNNLPGHVALIVDGNRRWARKEKRDRISDGHRAGAGKAVDFLHWCDELDINIVTLYLLSNDNLKNRNRQELNDLVQVICDLIAQVSKRWKVNHVGSCENLPELLGNSLEGVKSSTKTNRYSERSMTVNLAIGYSGRAEITEAVRKIVNTYPIGDLPEKITEEVISANLYTGGLSDPDLIIRTSGEQRLSDFMPWQSTHSEFYFLEALGPDLRKVDFLRAIRDFSIRRRSFGA.

Aspartate 39 is a catalytic residue. Position 39 (aspartate 39) interacts with Mg(2+). Substrate-binding positions include 40–43 (GNRR), tryptophan 44, arginine 52, histidine 57, and 85–87 (SND). Asparagine 88 functions as the Proton acceptor in the catalytic mechanism. Substrate is bound by residues arginine 92, arginine 207, and 213 to 215 (RLS). A Mg(2+)-binding site is contributed by glutamate 226.

This sequence belongs to the UPP synthase family. In terms of assembly, homodimer. Mg(2+) serves as cofactor.

Its function is as follows. Catalyzes the condensation of isopentenyl diphosphate (IPP) with allylic pyrophosphates generating different type of terpenoids. The chain is Isoprenyl transferase 2 from Tropheryma whipplei (strain Twist) (Whipple's bacillus).